Reading from the N-terminus, the 642-residue chain is AEKIKICLQKQVNSSFSLHNGFGGNLYATEEKRMFELVKPKAGASVLNQSTWICFGDSRTDQSNSAFPRSADVSAKTAEKFRSLSGGSLMLSMFGPPGKVDYLYQGCGKHKVFYEGVNWSPHTAIDCYRKNWTDIKLNFQKSIYELASQSHCMSLVNALDKTIPLQATKGVAKNCNNSFLKNPALYTQEVKPLDQICGEENLAFFTLPTQFGTYECKLHLVASCYFIYDSKEVYNKRGCGNYFQVIYDSSGKVVGGLDNRVSPYTGNSGDTPTMQCDMLQLKPGRYSVRSSPRFLLMPERSYCFDMKEKGLVTAVQSIWGKGRKSDYAVDQACLSTPGCMLIQKQKPYIGEADDHHGDQEMRELLSGLDYEARCISQSGWVNETSPFTEEYLLPPKFGRCPLAAKEESIPKIPDGLLIPTSGTDTTVTKPKSRIFGIDDLIIGLFFVAIVEAGIGGYLLGSRKESGGGVTKESAEKGFEKIGNDIQILRSSTNIAIEKLNDRISHDEQAIRDLTLEIENARSEALLGELGIIRALLVGNISIGLQESLWELASEITNRAGDLAVEVSPGCWIIDNNICDQSCQNFIFKFNETAPVPTIPPLDTKIDLQSDPFYWGSSLGLAITTPISLAALVISGIAICRTK.

A signal peptide is located at residue Ala-1. Residues 2 to 27 (EKIKICLQKQVNSSFSLHNGFGGNLY) form a fusion domain-1 region. Residues 2–617 (EKIKICLQKQ…QSDPFYWGSS (616 aa)) are Extracellular-facing. Intrachain disulfides connect Cys-7–Cys-570, Cys-107–Cys-152, Cys-127–Cys-175, Cys-197–Cys-239, Cys-216–Cys-303, Cys-224–Cys-276, and Cys-333–Cys-339. Residues Asn-13 and Asn-48 are each glycosylated (N-linked (GlcNAc...) asparagine; by host). Positions 28–138 (ATEEKRMFEL…RKNWTDIKLN (111 aa)) are esterase domain-1. Residue Ser-58 is the Nucleophile of the active site. A glycan (N-linked (GlcNAc...) asparagine; by host) is linked at Asn-131. Positions 138–297 (NFQKSIYELA…VRSSPRFLLM (160 aa)) are N-acetyl-9-O-acetylneuraminic acid binding. The interval 298–352 (PERSYCFDMKEKGLVTAVQSIWGKGRKSDYAVDQACLSTPGCMLIQKQKPYIGEA) is esterase domain-2. Residues Asp-353 and His-356 each act as charge relay system in the active site. The interval 353–638 (DDHHGDQEMR…AALVISGIAI (286 aa)) is fusion domain-2. An N-linked (GlcNAc...) asparagine; by host glycan is attached at Asn-382. The helical transmembrane segment at 618-638 (LGLAITTPISLAALVISGIAI) threads the bilayer. The Cytoplasmic portion of the chain corresponds to 639–642 (CRTK).

The protein belongs to the influenza type C/coronaviruses hemagglutinin-esterase family. As to quaternary structure, homotrimer of disulfide-linked HEF1-HEF2. In natural infection, inactive HEF is matured into HEF1 and HEF2 outside the cell by one or more trypsin-like, arginine-specific endoprotease.

The protein localises to the virion membrane. It is found in the host cell membrane. It catalyses the reaction N-acetyl-9-O-acetylneuraminate + H2O = N-acetylneuraminate + acetate + H(+). It carries out the reaction N-acetyl-4-O-acetylneuraminate + H2O = N-acetylneuraminate + acetate + H(+). In terms of biological role, binds to the N-acetyl-9-O-acetylneuraminic acid residues on the cell surface, bringing about the attachment of the virus particle to the cell. Plays a major role in the determination of host range restriction and virulence. Class I viral fusion protein. Responsible for penetration of the virus into the cell cytoplasm by mediating the fusion of the membrane of the endocytosed virus particle with the endosomal membrane. Low pH in endosomes induce an irreversible conformational change in HEF2, releasing the fusion hydrophobic peptide. Several trimers are required to form a competent fusion pore. Displays a receptor-destroying activity which is a neuraminidate-O-acetyl esterase. This activity cleaves off any receptor on the cell surface, which would otherwise prevent virions release. These cleavages prevent self-aggregation and ensure the efficient spread of the progeny virus from cell to cell. This Influenza C virus (strain C/Pig/Beijing/439/1982) protein is Hemagglutinin-esterase-fusion glycoprotein (HE).